Here is a 283-residue protein sequence, read N- to C-terminus: Protein boule-like (283 aa).

Residues M1 to P25 form a disordered region. The RRM domain maps to N33 to R110. The DAZ domain occupies P160–Q184.

Belongs to the RRM DAZ family. Interacts with DAZ1 and DAZL. As to expression, testis specific. Not expressed in early embryos, primordial germ cells and spermatogonial cells. First expressed in the cytoplasm of spermatocytes and then persists through meiosis.

The protein localises to the cytoplasm. In terms of biological role, probable RNA-binding protein, which may be required during spermatogenesis. May act by binding to the 3'-UTR of mRNAs and regulating their translation. In Homo sapiens (Human), this protein is Protein boule-like (BOLL).